The chain runs to 152 residues: UPF0225 protein YchJ (152 aa).

The protein belongs to the UPF0225 family.

This Escherichia coli O139:H28 (strain E24377A / ETEC) protein is UPF0225 protein YchJ.